The primary structure comprises 282 residues: ATP phosphoribosyltransferase (282 aa).

It belongs to the ATP phosphoribosyltransferase family. Long subfamily. Mg(2+) is required as a cofactor.

The protein localises to the cytoplasm. It carries out the reaction 1-(5-phospho-beta-D-ribosyl)-ATP + diphosphate = 5-phospho-alpha-D-ribose 1-diphosphate + ATP. It functions in the pathway amino-acid biosynthesis; L-histidine biosynthesis; L-histidine from 5-phospho-alpha-D-ribose 1-diphosphate: step 1/9. With respect to regulation, feedback inhibited by histidine. Functionally, catalyzes the condensation of ATP and 5-phosphoribose 1-diphosphate to form N'-(5'-phosphoribosyl)-ATP (PR-ATP). Has a crucial role in the pathway because the rate of histidine biosynthesis seems to be controlled primarily by regulation of HisG enzymatic activity. The chain is ATP phosphoribosyltransferase from Pyrobaculum calidifontis (strain DSM 21063 / JCM 11548 / VA1).